The following is a 327-amino-acid chain: CREB homolog crh-1 (327 aa).

The KID domain occupies 16–75 (SPLMMLLFKALQEGGDSEDEARRRREQLNRRPSYRMILKDLETADKVMKKEPEETPPSSV). 2 disordered regions span residues 27–114 (QEGG…SPYG) and 151–200 (KVFP…VQSL). Basic and acidic residues predominate over residues 35–44 (EARRRREQLN). Serine 48 carries the post-translational modification Phosphoserine. The span at 52 to 68 (ILKDLETADKVMKKEPE) shows a compositional bias: basic and acidic residues. Residues 71–84 (PPSSVDASPLQFQS) show a composition bias toward polar residues. Residues 161-172 (GLGGGGGGGGVP) are compositionally biased toward gly residues. The span at 173 to 199 (GPSSGIAGMSVQPPTSSTPSQQQSVQS) shows a compositional bias: low complexity. Residues 266-317 (NRKRQVRLLKNREAAKECRRKKKEYVKCLENRVSVLENQNKALIEELKTLKE) form the bZIP domain. The basic motif stretch occupies residues 267–292 (RKRQVRLLKNREAAKECRRKKKEYVK). A coiled-coil region spans residues 284 to 318 (RRKKKEYVKCLENRVSVLENQNKALIEELKTLKEL). Positions 294-315 (LENRVSVLENQNKALIEELKTL) are leucine-zipper.

The protein belongs to the bZIP family. As to quaternary structure, interacts with CREB-regulated transcription coactivator homolog crtc-1. In terms of processing, transcriptional activity is enhanced by phosphorylation. Phosphorylated by cmk-1. Expressed widely, including in head neurons AFD, gustatory neurons ASE, the olfactory neurons AWC, and in the ASI sensory neurons, as well as in the intestine and gonads in hermaphrodites.

It is found in the nucleus. Transcription factor. Transcriptional activity probably positively regulated by phosphorylation. Modulates expression of target genes, acting by binding to regulatory cAMP response elements (CRE). Acts downstream of the calcium-triggered CaMKK-CaMK1 signaling cascade, consisting of the protein kinase kinase ckk-1 and the protein kinase cmk-1. Plays a role in learning and memory, feeding behavior, stress response, entry into the dauer stage and modulation of lifespan. Involved in commitment to the developmentally arrested larval state known as dauer, acting by positively regulating the expression of dauer-inhibiting TGF-beta-like daf-7 in the ASI neurons. Plays a role in both associative and non-associative long-term memory (LTM). Involved in modulating feeding behavior, acting by regulating transcription of tryptophan hydroxylase tph-1 in serotonergic ADF neurons. Regulates transcription of genes involved in endoplasmic reticulum (ER) stress. Involved in modulation of lifespan, in response to raised temperature, but independently of the heat-shock response pathway, acting by regulating transcription of FMRFamide-like neuropeptides flp-6 in the AFD neuron. Its function is as follows. Plays a role in associative long-term memory (LTM) and learning. Functionally, plays a role in associative long-term memory (LTM) and learning; perhaps required at the time of acquisition and/or the consolidation phase of memory formation. This Caenorhabditis elegans protein is CREB homolog crh-1.